Reading from the N-terminus, the 296-residue chain is MKTKIINLVVVTGMSGAGKTVAIQSFEDIGYFTIDNIPPSLVPKVIELLKHSEETDKIALVVDMRSRVFFDEINDILDQLESNEKLNFKILFLDATDGELVSRYKETRRSHPLAADGRVLDGIKLERELLSPLKSLSQNVVDTTKLTPRQLRKAISEQFSSKQDQSSFRIEVLSFGFKYGLPLDADLVFDVRFLPNPYYDPTLRNLTGLDKEVYDFVMTHKESEDFYKNLNHLIKPILPGYQKEGKSVLTIAVGCTGGQHRSVAFAHRLAQDLKNDWTVNETHRDKDRRKETVNRS.

Residue 13 to 20 (GMSGAGKT) coordinates ATP. 63 to 66 (DMRS) provides a ligand contact to GTP.

This sequence belongs to the RapZ-like family.

In terms of biological role, displays ATPase and GTPase activities. The sequence is that of Nucleotide-binding protein str0831 from Streptococcus thermophilus (strain CNRZ 1066).